Reading from the N-terminus, the 78-residue chain is UPF0335 protein A1E_00570 (78 aa).

It belongs to the UPF0335 family.

In Rickettsia canadensis (strain McKiel), this protein is UPF0335 protein A1E_00570.